A 231-amino-acid chain; its full sequence is 4-hydroxy-tetrahydrodipicolinate reductase (231 aa).

NAD(+)-binding positions include Asp33, 68–70 (CTT), and 92–95 (SSNT). His124 functions as the Proton donor/acceptor in the catalytic mechanism. Residue His125 coordinates (S)-2,3,4,5-tetrahydrodipicolinate. The Proton donor role is filled by Lys128. (S)-2,3,4,5-tetrahydrodipicolinate is bound at residue 134 to 135 (GT).

Belongs to the DapB family.

Its subcellular location is the cytoplasm. It catalyses the reaction (S)-2,3,4,5-tetrahydrodipicolinate + NAD(+) + H2O = (2S,4S)-4-hydroxy-2,3,4,5-tetrahydrodipicolinate + NADH + H(+). The enzyme catalyses (S)-2,3,4,5-tetrahydrodipicolinate + NADP(+) + H2O = (2S,4S)-4-hydroxy-2,3,4,5-tetrahydrodipicolinate + NADPH + H(+). Its pathway is amino-acid biosynthesis; L-lysine biosynthesis via DAP pathway; (S)-tetrahydrodipicolinate from L-aspartate: step 4/4. Its function is as follows. Catalyzes the conversion of 4-hydroxy-tetrahydrodipicolinate (HTPA) to tetrahydrodipicolinate. The polypeptide is 4-hydroxy-tetrahydrodipicolinate reductase (Brachyspira hyodysenteriae (strain ATCC 49526 / WA1)).